Reading from the N-terminus, the 628-residue chain is Chaperone protein HtpG (628 aa).

An a; substrate-binding region spans residues 1 to 333 (MTTDTKATET…SADLPLNVSR (333 aa)). Residues 334-549 (EMIQESPLLA…EHGPDRQFER (216 aa)) are b. Residues 550-628 (LMNAAGRLDK…RLIARGIAKG (79 aa)) form a c region.

The protein belongs to the heat shock protein 90 family. In terms of assembly, homodimer.

It is found in the cytoplasm. In terms of biological role, molecular chaperone. Has ATPase activity. The chain is Chaperone protein HtpG from Mesorhizobium japonicum (strain LMG 29417 / CECT 9101 / MAFF 303099) (Mesorhizobium loti (strain MAFF 303099)).